Reading from the N-terminus, the 370-residue chain is Phosphate acyltransferase (370 aa).

The disordered stretch occupies residues 349 to 370 (SAGRAGQDAPDEMAAPGRSEKR).

This sequence belongs to the PlsX family. In terms of assembly, homodimer. Probably interacts with PlsY.

The protein localises to the cytoplasm. It catalyses the reaction a fatty acyl-[ACP] + phosphate = an acyl phosphate + holo-[ACP]. It participates in lipid metabolism; phospholipid metabolism. In terms of biological role, catalyzes the reversible formation of acyl-phosphate (acyl-PO(4)) from acyl-[acyl-carrier-protein] (acyl-ACP). This enzyme utilizes acyl-ACP as fatty acyl donor, but not acyl-CoA. This Cereibacter sphaeroides (strain ATCC 17029 / ATH 2.4.9) (Rhodobacter sphaeroides) protein is Phosphate acyltransferase.